Reading from the N-terminus, the 198-residue chain is MGKKMTIASLILMTAGLTACGANDNAMNDTRNNGNTRPIGYYTNENDADRQGDGIDHDGPVSELMEDQNDGNRNTTNVNNRDRVTADDRVPLATDGTYNNTNNRNMNRNAANNGYDNQENRRLAAKIANRVKQVKNVNDTQVMVSDDRVVIAVKSHREFTKSDRDNVVKAARNYANGRDVQVSTDKGLFRKLHKMNNR.

The N-terminal stretch at 1–21 (MGKKMTIASLILMTAGLTACG) is a signal peptide. Residues 91-115 (PLATDGTYNNTNNRNMNRNAANNGY) form a disordered region. Residues 95 to 115 (DGTYNNTNNRNMNRNAANNGY) show a composition bias toward low complexity.

It is found in the spore cortex. The polypeptide is Sporulation cortex protein CoxA (coxA) (Bacillus subtilis (strain 168)).